A 434-amino-acid polypeptide reads, in one-letter code: Eukaryotic translation initiation factor 3 subunit E (434 aa).

The region spanning 219–392 (FFNHPKGRDL…GHVVMGTQPL (174 aa)) is the PCI domain.

Belongs to the eIF-3 subunit E family. As to quaternary structure, component of the eukaryotic translation initiation factor 3 (eIF-3) complex. The eIF-3 complex interacts with pix. Interacts with mxt.

Its subcellular location is the cytoplasm. Its function is as follows. Component of the eukaryotic translation initiation factor 3 (eIF-3) complex, which is involved in protein synthesis of a specialized repertoire of mRNAs and, together with other initiation factors, stimulates binding of mRNA and methionyl-tRNAi to the 40S ribosome. The eIF-3 complex specifically targets and initiates translation of a subset of mRNAs involved in cell proliferation. The chain is Eukaryotic translation initiation factor 3 subunit E (eIF3-S6) from Drosophila pseudoobscura pseudoobscura (Fruit fly).